Here is a 203-residue protein sequence, read N- to C-terminus: Large ribosomal subunit protein bL25 (203 aa).

The protein belongs to the bacterial ribosomal protein bL25 family. CTC subfamily. Part of the 50S ribosomal subunit; part of the 5S rRNA/L5/L18/L25 subcomplex. Contacts the 5S rRNA. Binds to the 5S rRNA independently of L5 and L18.

Its function is as follows. This is one of the proteins that binds to the 5S RNA in the ribosome where it forms part of the central protuberance. In Cellvibrio japonicus (strain Ueda107) (Pseudomonas fluorescens subsp. cellulosa), this protein is Large ribosomal subunit protein bL25.